A 115-amino-acid polypeptide reads, in one-letter code: MKVLVLFSVLFLTLFSYSSTEAIDEFDSDAEEDMLSLMANEQVRAKACTPRLHDCSHDRHSCCRSELFKDVCTCFYPEGGDNEVCTCQQPKHLKYMEKAADKAKKFGGKIKKWFG.

The signal sequence occupies residues 1–22; it reads MKVLVLFSVLFLTLFSYSSTEA. A propeptide spanning residues 23–44 is cleaved from the precursor; that stretch reads IDEFDSDAEEDMLSLMANEQVR. Intrachain disulfides connect C48–C63, C55–C72, C62–C87, and C74–C85.

It belongs to the neurotoxin 19 (CSTX) family. 01 subfamily. As to expression, expressed by the venom gland.

The protein resides in the secreted. This is Toxin-like structure LSTX-D1 from Lycosa singoriensis (Wolf spider).